Reading from the N-terminus, the 81-residue chain is Acyl carrier protein (81 aa).

The Carrier domain maps to 2–80 (ASKDEILAGL…DAVNFIDNAQ (79 aa)). At Ser-40 the chain carries O-(pantetheine 4'-phosphoryl)serine.

Belongs to the acyl carrier protein (ACP) family. 4'-phosphopantetheine is transferred from CoA to a specific serine of apo-ACP by AcpS. This modification is essential for activity because fatty acids are bound in thioester linkage to the sulfhydryl of the prosthetic group.

Its subcellular location is the cytoplasm. It participates in lipid metabolism; fatty acid biosynthesis. Carrier of the growing fatty acid chain in fatty acid biosynthesis. This Kocuria rhizophila (strain ATCC 9341 / DSM 348 / NBRC 103217 / DC2201) protein is Acyl carrier protein.